The following is a 108-amino-acid chain: Phosphoribosyl-ATP pyrophosphatase (108 aa).

It belongs to the PRA-PH family.

It localises to the cytoplasm. It catalyses the reaction 1-(5-phospho-beta-D-ribosyl)-ATP + H2O = 1-(5-phospho-beta-D-ribosyl)-5'-AMP + diphosphate + H(+). The protein operates within amino-acid biosynthesis; L-histidine biosynthesis; L-histidine from 5-phospho-alpha-D-ribose 1-diphosphate: step 2/9. This Aromatoleum aromaticum (strain DSM 19018 / LMG 30748 / EbN1) (Azoarcus sp. (strain EbN1)) protein is Phosphoribosyl-ATP pyrophosphatase.